A 1310-amino-acid polypeptide reads, in one-letter code: Contactin-associated protein-like 4 (1310 aa).

The signal sequence occupies residues 1 to 27 (MNMGSVAGAVLKMLLLLSTQNWNRVEA). The Extracellular portion of the chain corresponds to 28–1243 (GNSYDCDEPL…LTHAIKSDSA (1216 aa)). The F5/8 type C domain maps to 33 to 179 (CDEPLVSALP…IGMRIEVFGC (147 aa)). A disulfide bond links cysteine 33 and cysteine 179. The Laminin G-like 1 domain occupies 214-346 (FKTMESDGIL…NLFYNGVDVI (133 aa)). N-linked (GlcNAc...) asparagine glycans are attached at residues asparagine 262, asparagine 287, and asparagine 361. Cystine bridges form between cysteine 334-cysteine 366, cysteine 517-cysteine 549, cysteine 555-cysteine 566, and cysteine 560-cysteine 575. A Laminin G-like 2 domain is found at 400-529 (FRTWNKAGLL…LISINNKMVD (130 aa)). The N-linked (GlcNAc...) asparagine glycan is linked to asparagine 540. An EGF-like 1 domain is found at 551-588 (ISDRCLPNSCEHGGECSQSWSTFHCNCTNTGYTGATCH). N-linked (GlcNAc...) asparagine glycosylation is present at asparagine 576. Residues cysteine 577 and cysteine 587 are joined by a disulfide bond. One can recognise a Fibrinogen C-terminal domain in the interval 589-794 (SSVYEQSCEA…LLCRGDRPFW (206 aa)). N-linked (GlcNAc...) asparagine glycans are attached at residues asparagine 604, asparagine 627, asparagine 639, asparagine 708, and asparagine 750. Positions 795–960 (NAASFNTEAS…TVTPGVQPGC (166 aa)) constitute a Laminin G-like 3 domain. 4 cysteine pairs are disulfide-bonded: cysteine 933/cysteine 960, cysteine 964/cysteine 977, cysteine 971/cysteine 986, and cysteine 988/cysteine 998. In terms of domain architecture, EGF-like 2 spans 960-999 (CRGHCGSYGKLCRHGGKCREKPSGFFCDCSSSAYAGPFCS). N-linked (GlcNAc...) asparagine glycosylation is found at asparagine 1019, asparagine 1025, and asparagine 1075. Residues 1048–1204 (FRTTRAPSLL…VTGHVTESSC (157 aa)) form the Laminin G-like 4 domain. An intrachain disulfide couples cysteine 1169 to cysteine 1204. A helical membrane pass occupies residues 1244–1264 (VIGGLIAVVIFILLCVSAIAV). At 1265–1310 (RIYQQKRLYKRNEAKRSENVDSAEAVLKSELHIQNAVGENQKEYFF) the chain is on the cytoplasmic side.

The protein belongs to the neurexin family. As to quaternary structure, interacts with TIAM1. Specifically present in developing cortical interneurons: highly expressed in cortical parvalbumin (PV) cells and midbrain dopaminergic neurons and is localized presynaptically (at protein level). Also present in the substantia nigra pars compacta (SnC) and ventral tegmental area (VTA) midbrain dopaminergic projection populations.

The protein localises to the presynaptic cell membrane. Its function is as follows. Presynaptic protein involved in both dopaminergic synaptic transmission and GABAergic system, thereby participating in the structural maturation of inhibitory interneuron synapses. Involved in the dopaminergic synaptic transmission by attenuating dopamine release through a presynaptic mechanism. Also participates in the GABAergic system. The protein is Contactin-associated protein-like 4 (Cntnap4) of Mus musculus (Mouse).